The following is a 2343-amino-acid chain: Pecanex-like protein 1 (2343 aa).

2 consecutive transmembrane segments (helical) span residues 33-53 and 57-77; these read ALHLYLWLFLLGLPFTLYMAL and MIIVAVYCPVVAAVFIVLKMV. Disordered regions lie at residues 98–163, 271–290, 306–691, and 749–826; these read FTDQ…GSSR, SHSYRKEHRPRGVPRTSSSA, QQQR…TRAR, and TRSR…QGQQ. Positions 143–163 are enriched in polar residues; sequence SSRNSYAGLDPSNQIGSGSSR. Residues 272–282 show a composition bias toward basic residues; it reads HSYRKEHRPRG. Low complexity predominate over residues 372-390; that stretch reads SLRSLSTRSSGSTESYCSG. Over residues 396–412 the composition is skewed to polar residues; sequence NSTLSSYKSEQTSSTHI. Composition is skewed to basic and acidic residues over residues 416–457, 507–521, and 530–546; these read LSEH…DKTA, RPPEQSAESKEEQGE, and KVCKDDGGKQKEGDVRP. Over residues 556–571 the composition is skewed to basic residues; the sequence is TSAHKPGRRRTGKKRA. Composition is skewed to low complexity over residues 624 to 637, 769 to 780, and 809 to 826; these read SDSSSSATSHSCQS, AATGAAQASEEA, and TLLIGPPLSLQDGQQGQQ. Helical transmembrane passes span 978–998, 1009–1029, 1034–1054, 1068–1088, 1118–1138, 1162–1182, 1195–1215, 1268–1288, 1296–1316, 1406–1426, 1434–1454, 1458–1478, and 1493–1513; these read FWILPQLWIGINFDRLTLLAL, ILAVVLAILVAFLGSILLIQG, IWVFQFCLVIASCQYSLLKSV, IIAYSRPVYFCLCCGLIWLLD, LVIVFTLCFPIVFFIGLLPQV, LLAALYSFLCSVVAVALLYGL, HIPVLFSVFCGLLVAVSYHLS, LVVCVVIGVLYFAIHVSTVFT, YVLYALVGFVGLVTHYVLPQV, SFSSPTYQYITVIFTVLFFKF, TMLLDLFFMSILFSKLWELLY, FVYTYVAPWQITWGSAFHAFA, and AVVSALFSTPLNPFLGSAIFI. The tract at residues 2050–2120 is disordered; it reads EDSDTGGGTS…VQSSLVRQSP (71 aa). Composition is skewed to polar residues over residues 2060–2080 and 2094–2117; these read CPANSATTASDPHNSVPQGST and PTTSYPPTLGTSHSAHSVQSSLVR.

It belongs to the pecanex family. As to expression, specifically expressed in the germ line and not in the somatic cells of the testis, reaching its peak at the pachytene stage of the meiotic prophase. Detected in pachytene spermatocytes and round spermatids (at protein level).

The protein localises to the membrane. The protein is Pecanex-like protein 1 of Rattus norvegicus (Rat).